The primary structure comprises 79 residues: Tau-theraphotoxin-Hs1a (79 aa).

6 disulfide bridges follow: C2-C16, C9-C23, C15-C31, C44-C58, C51-C63, and C57-C71. Domain repeat units follow at residues 2–31 and 42–71; these read CAKE…IPHC and TNCA…IPYC. The interval 2–71 is 2 X approximate repeats with cysteine pattern C-C-CC-C-C; sequence CAKEGEVCSW…DCPLAFIPYC (70 aa).

It belongs to the neurotoxin 23 family. Double-knot toxin subfamily. In terms of assembly, interacts with TRPV1 (2 toxins (4 moieties) bind 1 channel (homotetramer)). As to expression, expressed by the venom gland.

The protein resides in the secreted. Its function is as follows. Selectively activates the heat-activated TRPV1 channel. It binds to TRPV1 in an open state-dependent manner, trapping it there to produce irreversible currents. It binds to the outer edge of the external pore of TRPV1 in a counterclockwise configuration, using a limited protein-protein interface and inserting hydrophobic residues into the bilayer. It also partitions naturally into membranes, with the two lobes exhibiting opposing energetics for membrane partitioning (K1) and channel activation (K2). In addition, the toxin disrupts a cluster of hydrophobic residues behind the selectivity filter that are critical for channel activation. The chain is Tau-theraphotoxin-Hs1a from Cyriopagopus schmidti (Chinese bird spider).